We begin with the raw amino-acid sequence, 287 residues long: Lectin 10 (287 aa).

Topologically, residues 1-11 are cytoplasmic; sequence MALSNLKSNRT. Residues 12–31 traverse the membrane as a helical segment; it reads LSSSLITIFIISLFLQYHNI. At 32–287 the chain is on the extracellular side; sequence KSQSSWQSRQ…IINWSFESAL (256 aa). N-linked (GlcNAc...) asparagine glycosylation is found at N124, N147, N243, and N280.

The protein belongs to the leguminous lectin family.

The protein localises to the membrane. Functionally, may be involved in arbuscular mycorrhizal (AM) symbiosis with AM fungi. The chain is Lectin 10 from Medicago truncatula (Barrel medic).